A 385-amino-acid polypeptide reads, in one-letter code: Chaperone protein DnaJ (385 aa).

The J domain maps to D5–G70. The CR-type zinc finger occupies G143–D221. Zn(2+)-binding residues include C156, C159, C173, C176, C195, C198, C209, and C212. CXXCXGXG motif repeat units lie at residues C156–G163, C173–G180, C195–G202, and C209–G216.

This sequence belongs to the DnaJ family. In terms of assembly, homodimer. The cofactor is Zn(2+).

Its subcellular location is the cytoplasm. In terms of biological role, participates actively in the response to hyperosmotic and heat shock by preventing the aggregation of stress-denatured proteins and by disaggregating proteins, also in an autonomous, DnaK-independent fashion. Unfolded proteins bind initially to DnaJ; upon interaction with the DnaJ-bound protein, DnaK hydrolyzes its bound ATP, resulting in the formation of a stable complex. GrpE releases ADP from DnaK; ATP binding to DnaK triggers the release of the substrate protein, thus completing the reaction cycle. Several rounds of ATP-dependent interactions between DnaJ, DnaK and GrpE are required for fully efficient folding. Also involved, together with DnaK and GrpE, in the DNA replication of plasmids through activation of initiation proteins. The chain is Chaperone protein DnaJ from Ruegeria sp. (strain TM1040) (Silicibacter sp.).